A 322-amino-acid polypeptide reads, in one-letter code: Transaldolase (322 aa).

Residue Lys132 is the Schiff-base intermediate with substrate of the active site.

Belongs to the transaldolase family. Type 1 subfamily. In terms of assembly, homodimer.

The protein resides in the cytoplasm. The enzyme catalyses D-sedoheptulose 7-phosphate + D-glyceraldehyde 3-phosphate = D-erythrose 4-phosphate + beta-D-fructose 6-phosphate. It participates in carbohydrate degradation; pentose phosphate pathway; D-glyceraldehyde 3-phosphate and beta-D-fructose 6-phosphate from D-ribose 5-phosphate and D-xylulose 5-phosphate (non-oxidative stage): step 2/3. Transaldolase is important for the balance of metabolites in the pentose-phosphate pathway. This chain is Transaldolase, found in Protochlamydia amoebophila (strain UWE25).